The chain runs to 297 residues: UDP-N-acetylenolpyruvoylglucosamine reductase (297 aa).

The 166-residue stretch at 24–189 folds into the FAD-binding PCMH-type domain; that stretch reads KVGGNAEIFF…LKAIFKVNKG (166 aa). R169 is an active-site residue. S218 acts as the Proton donor in catalysis. E289 is an active-site residue.

It belongs to the MurB family. FAD serves as cofactor.

The protein resides in the cytoplasm. The enzyme catalyses UDP-N-acetyl-alpha-D-muramate + NADP(+) = UDP-N-acetyl-3-O-(1-carboxyvinyl)-alpha-D-glucosamine + NADPH + H(+). It participates in cell wall biogenesis; peptidoglycan biosynthesis. Cell wall formation. The sequence is that of UDP-N-acetylenolpyruvoylglucosamine reductase from Rickettsia canadensis (strain McKiel).